A 214-amino-acid polypeptide reads, in one-letter code: Outer-membrane lipoprotein carrier protein (214 aa).

The signal sequence occupies residues 1–24 (MKIKLAFAVLLALCLSLSVMPVLA).

Belongs to the LolA family. In terms of assembly, monomer.

The protein localises to the periplasm. Participates in the translocation of lipoproteins from the inner membrane to the outer membrane. Only forms a complex with a lipoprotein if the residue after the N-terminal Cys is not an aspartate (The Asp acts as a targeting signal to indicate that the lipoprotein should stay in the inner membrane). The polypeptide is Outer-membrane lipoprotein carrier protein (Alkalilimnicola ehrlichii (strain ATCC BAA-1101 / DSM 17681 / MLHE-1)).